Reading from the N-terminus, the 440-residue chain is Xylose isomerase (440 aa).

Residues His-100 and Asp-103 contribute to the active site. Mg(2+)-binding residues include Glu-231, Glu-267, His-270, Asp-295, Asp-306, Asp-308, and Asp-338.

Belongs to the xylose isomerase family. Homotetramer. Mg(2+) serves as cofactor.

It is found in the cytoplasm. It carries out the reaction alpha-D-xylose = alpha-D-xylulofuranose. This chain is Xylose isomerase, found in Paraburkholderia xenovorans (strain LB400).